The sequence spans 291 residues: 33 kDa chaperonin (291 aa).

2 cysteine pairs are disulfide-bonded: C236–C238 and C269–C272.

It belongs to the HSP33 family. In terms of processing, under oxidizing conditions two disulfide bonds are formed involving the reactive cysteines. Under reducing conditions zinc is bound to the reactive cysteines and the protein is inactive.

The protein localises to the cytoplasm. Its function is as follows. Redox regulated molecular chaperone. Protects both thermally unfolding and oxidatively damaged proteins from irreversible aggregation. Plays an important role in the bacterial defense system toward oxidative stress. The chain is 33 kDa chaperonin from Lactobacillus johnsonii (strain CNCM I-12250 / La1 / NCC 533).